Consider the following 976-residue polypeptide: Protein PLASTID MOVEMENT IMPAIRED 1-RELATED 2 (976 aa).

The C2 NT-type domain occupies I81–V229. Basic and acidic residues predominate over residues K309–K319. Disordered regions lie at residues K309–R343 and N381–K419. The segment covering S394–D414 has biased composition (low complexity).

Its function is as follows. Seems not necessary for chloroplast and nuclear photorelocation movements. The protein is Protein PLASTID MOVEMENT IMPAIRED 1-RELATED 2 of Arabidopsis thaliana (Mouse-ear cress).